The following is a 242-amino-acid chain: AA9 family lytic polysaccharide monooxygenase F (242 aa).

The signal sequence occupies residues 1–20; sequence MVQFKLSTASLLALASYAAA. Position 21 (histidine 21) interacts with Cu(2+). Positions 31–53 are disordered; the sequence is GQTYPGADPHNPNPESPGWQAEN. Disulfide bonds link cysteine 71–cysteine 192 and cysteine 112–cysteine 116. Residue histidine 101 coordinates Cu(2+). O2 is bound by residues histidine 178 and glutamine 187. Tyrosine 189 is a Cu(2+) binding site.

Belongs to the polysaccharide monooxygenase AA9 family. Cu(2+) serves as cofactor.

It localises to the secreted. The enzyme catalyses [(1-&gt;4)-beta-D-glucosyl]n+m + reduced acceptor + O2 = 4-dehydro-beta-D-glucosyl-[(1-&gt;4)-beta-D-glucosyl]n-1 + [(1-&gt;4)-beta-D-glucosyl]m + acceptor + H2O.. In terms of biological role, lytic polysaccharide monooxygenase (LPMO) that depolymerizes crystalline and amorphous polysaccharides via the oxidation of scissile alpha- or beta-(1-4)-glycosidic bonds, yielding C1 or C4 oxidation products. Catalysis by LPMOs requires the reduction of the active-site copper from Cu(II) to Cu(I) by a reducing agent and H(2)O(2) or O(2) as a cosubstrate. Active on hemicelluloses, including xylan, glucomannan, and xyloglucan. Shows clear activity on cellooligosaccharides, generating C4 oxidation products. Has no activity on ivory nut mannan (INM), a linear beta-1,4-linked mannan without substitutions. This Malbranchea cinnamomea (Thermophilic fungus) protein is AA9 family lytic polysaccharide monooxygenase F.